The primary structure comprises 213 residues: Large ribosomal subunit protein eL14 (213 aa).

At lysine 79 the chain carries N6-acetyllysine. Lysine 85 carries the N6-acetyllysine; alternate modification. At lysine 85 the chain carries N6-succinyllysine; alternate. A Glycyl lysine isopeptide (Lys-Gly) (interchain with G-Cter in SUMO2) cross-link involves residue lysine 124. The residue at position 139 (serine 139) is a Phosphoserine. The disordered stretch occupies residues 166 to 213 (TAGKKAPAQKAPAQKAAGQKAAPPPKAQKVQKPPAQKAPAPKASGEKA). Residues 169–173 (KKAPA) form a 1-1; approximate repeat. A 4 X 5 AA tandem repeats of Q-K-A-[APS]-X region spans residues 169–188 (KKAPAQKAPAQKAAGQKAAP). Tandem repeats lie at residues 174 to 178 (QKAPA), 179 to 183 (QKAAG), 184 to 188 (QKAAP), 191 to 193 (KAQ), and 194 to 196 (KVQ). The 2 X 3 AA tandem repeats of K-G-Q stretch occupies residues 191 to 196 (KAQKVQ). Residue lysine 202 is modified to N6-succinyllysine.

It belongs to the eukaryotic ribosomal protein eL14 family. In terms of assembly, component of the large ribosomal subunit.

The protein localises to the cytoplasm. Component of the large ribosomal subunit. The ribosome is a large ribonucleoprotein complex responsible for the synthesis of proteins in the cell. This is Large ribosomal subunit protein eL14 (RPL14) from Sus scrofa (Pig).